The following is a 673-amino-acid chain: Exoribonuclease 2 (673 aa).

Residues 191-516 form the RNB domain; the sequence is RTDLTATPFF…NHRLLKAVIA (326 aa). The 84-residue stretch at 562–645 folds into the S1 motif domain; that stretch reads DKVFNAEIID…ETRSLIAKPA (84 aa). Residues 650 to 673 are disordered; that stretch reads PGPAPVAPTSEADATPADEAPKAE.

Belongs to the RNR ribonuclease family. RNase II subfamily.

It localises to the cytoplasm. The catalysed reaction is Exonucleolytic cleavage in the 3'- to 5'-direction to yield nucleoside 5'-phosphates.. Its function is as follows. Involved in mRNA degradation. Hydrolyzes single-stranded polyribonucleotides processively in the 3' to 5' direction. This chain is Exoribonuclease 2, found in Aeromonas hydrophila subsp. hydrophila (strain ATCC 7966 / DSM 30187 / BCRC 13018 / CCUG 14551 / JCM 1027 / KCTC 2358 / NCIMB 9240 / NCTC 8049).